Consider the following 428-residue polypeptide: MMTSRSIVPQQSTDDVVVVDGKNVAKGRNRQVLGDIGNVVRGNYPKNNEPEKINHRPRTRSQNPTLLVEDNLKKPVVKRNAVPKPKKVAGKPKVVDVIEISSDSDEELGLVAAREKKATKKKATTYTSVLTARSKAACGLEKKQKEKIVDIDSADVENDLAAVEYVEDIYSFYKSVESEWRPRDYMASQPDINEKMRLILVEWLIDVHVRFELNPETFYLTVNILDRFLSVKPVPRKELQLVGLSALLMSAKYEEIWPPQVEDLVDIADHAYSHKQILVMEKTILSTLEWYLTVPTHYVFLARFIKASIADEKMENMVHYLAELGVMHYDTMIMFSPSMVAASAIYAARSSLRQVPIWTSTLKHHTGYSETQLMDCAKLLAYQQWKQQEEGSESSTKGALRKKYSKDERFAVALIPPAKALLTGTESA.

It belongs to the cyclin family. Cyclin AB subfamily. Interacts with FZR2/CCS52A1, FZR1/CCS52A2 and FZR3/CCS52B. In terms of tissue distribution, expressed in root tip, lateral root apex, shoot apex, leaf primordia, axillary buds, stamen and petal primordia, ovules and developing embryo.

The protein resides in the nucleus. The chain is Cyclin-B1-1 (CYCB1-1) from Arabidopsis thaliana (Mouse-ear cress).